Here is a 382-residue protein sequence, read N- to C-terminus: MAGIPGLFILLVLLCVFMQVSPYTVPWKPTWPAYRLPVVLPQSTLNLAKADFDAKAKLEVSSSCGPQCHKGTPLPTYEEAKQYLSYETLYANGSRTETRVGIYILSNGEGRARGRDSEATGRSRRKRQIYGYDGRFSIFGKDFLLNYPFSTSVKLSTGCTGTLVAEKHVLTAAHCIHDGKTYVKGTQKLRVGFLKPKYKDGAGGDNSSSSAMPDKMKFQWIRVKRTHVPKGWIKGNANDIGMDYDYALLELKKPHKRQFMKIGVSPPAKQLPGGRIHFSGYDNDRPGNLVYRFCDVKDETYDLLYQQCDAQPGASGSGVYVRMWKRPQQKWERKIIGIFSGHQWVDMNGSPQDFNVAVRITPLKYAQICYWIKGNYLDCREG.

The first 22 residues, 1–22, serve as a signal peptide directing secretion; that stretch reads MAGIPGLFILLVLLCVFMQVSP. N-linked (GlcNAc...) asparagine glycosylation is present at asparagine 92. Cysteines 159 and 175 form a disulfide. Histidine 174 functions as the Charge relay system in the catalytic mechanism. Residue asparagine 206 is glycosylated (N-linked (GlcNAc...) asparagine). Active-site charge relay system residues include aspartate 239 and serine 315.

The protein belongs to the peptidase S1 family.

The protein localises to the secreted. The polypeptide is Serine protease 23 (Prss23) (Mus musculus (Mouse)).